The primary structure comprises 283 residues: Adenylate dimethylallyltransferase (283 aa).

Belongs to the isopentenyl transferase family.

It catalyses the reaction dimethylallyl diphosphate + AMP = N(6)-(dimethylallyl)adenosine 5'-phosphate + diphosphate. Transfers dimethylallyl groups to AMP as part of the biosynthesis of cytokinin phytohormones like isopentenyl adenine or discadenine which controle spore formation and viability. This chain is Adenylate dimethylallyltransferase (iptA), found in Dictyostelium discoideum (Social amoeba).